Consider the following 122-residue polypeptide: MIIGVGIDVAEIERFGAALERTPQLADRLFVGSELTLPSGERRGIASLAARFAAKEALAKALGAPGGLLWSDAEVWVEESGQPRLRVSGTVAARAAELGVRGWHVSLSHDAGVASAVVIAEG.

D8 and E56 together coordinate Mg(2+).

This sequence belongs to the P-Pant transferase superfamily. AcpS family. Mg(2+) is required as a cofactor.

It is found in the cytoplasm. It catalyses the reaction apo-[ACP] + CoA = holo-[ACP] + adenosine 3',5'-bisphosphate + H(+). Its function is as follows. Transfers the 4'-phosphopantetheine moiety from coenzyme A to a Ser of acyl-carrier-protein. The sequence is that of Holo-[acyl-carrier-protein] synthase from Streptomyces griseus subsp. griseus (strain JCM 4626 / CBS 651.72 / NBRC 13350 / KCC S-0626 / ISP 5235).